The following is a 182-amino-acid chain: MSMKGKETMSDERIVVGKFGSTYGIRGWLKVFSYTDNAESLFDYSPWYVNQKGEWVEFKVESWKRHNKGMVAKLEGLDVREDAHLLTNLEIAIDPAVLPELSEDEFYWRELFGMQVVTTNGYDLGVVTDMLETGSNDVLVVKANLKDAFGQKERLIPFLEEQVIIKVDREAQRIEVDWDPGF.

One can recognise a PRC barrel domain in the interval 103–182 (EDEFYWRELF…RIEVDWDPGF (80 aa)).

The protein belongs to the RimM family. As to quaternary structure, binds ribosomal protein uS19.

The protein resides in the cytoplasm. An accessory protein needed during the final step in the assembly of 30S ribosomal subunit, possibly for assembly of the head region. Essential for efficient processing of 16S rRNA. May be needed both before and after RbfA during the maturation of 16S rRNA. It has affinity for free ribosomal 30S subunits but not for 70S ribosomes. This Vibrio vulnificus (strain CMCP6) protein is Ribosome maturation factor RimM.